A 457-amino-acid chain; its full sequence is Oxygen-independent coproporphyrinogen III oxidase (457 aa).

The Radical SAM core domain occupies 47–280 (RYPERPLSLY…QETIVSLTQA (234 aa)). S-adenosyl-L-methionine is bound at residue Tyr56. Residues Cys62 and Cys66 each coordinate [4Fe-4S] cluster. Residue Phe68 participates in S-adenosyl-L-methionine binding. Cys69 serves as a coordination point for [4Fe-4S] cluster. S-adenosyl-L-methionine is bound by residues Gly112, 113-114 (GT), Glu145, Gln172, Arg184, Asp209, Ala243, and Ile329.

This sequence belongs to the anaerobic coproporphyrinogen-III oxidase family. In terms of assembly, monomer. Requires [4Fe-4S] cluster as cofactor.

It localises to the cytoplasm. The catalysed reaction is coproporphyrinogen III + 2 S-adenosyl-L-methionine = protoporphyrinogen IX + 2 5'-deoxyadenosine + 2 L-methionine + 2 CO2. Its pathway is porphyrin-containing compound metabolism; protoporphyrin-IX biosynthesis; protoporphyrinogen-IX from coproporphyrinogen-III (AdoMet route): step 1/1. Its function is as follows. Involved in the heme biosynthesis. Catalyzes the anaerobic oxidative decarboxylation of propionate groups of rings A and B of coproporphyrinogen III to yield the vinyl groups in protoporphyrinogen IX. This Salmonella typhi protein is Oxygen-independent coproporphyrinogen III oxidase (hemN).